Here is a 415-residue protein sequence, read N- to C-terminus: Serine/threonine transporter SstT (415 aa).

8 helical membrane passes run 23–43 (ILIGLVLGVLLALVSKPAAIA), 47–67 (LGTLFVGALKAVAPVLVLMLV), 85–105 (ILFLYLLGTFSAALTAVLFSF), 144–164 (ALLNANYIGILVWAVGLGFAL), 181–201 (AVTFIVKVVIRFAPLGIFGLV), 220–240 (LLVLVGCMLLVALVINPLLVF), 293–313 (IPLGATINMAGAAITITVLTL), and 333–353 (VVASLCACGASGVAGGSLLLI).

This sequence belongs to the dicarboxylate/amino acid:cation symporter (DAACS) (TC 2.A.23) family.

Its subcellular location is the cell inner membrane. The enzyme catalyses L-serine(in) + Na(+)(in) = L-serine(out) + Na(+)(out). It catalyses the reaction L-threonine(in) + Na(+)(in) = L-threonine(out) + Na(+)(out). Functionally, involved in the import of serine and threonine into the cell, with the concomitant import of sodium (symport system). In Klebsiella pneumoniae (strain 342), this protein is Serine/threonine transporter SstT.